The chain runs to 64 residues: U9-ctenitoxin-Pr1a (64 aa).

5 disulfides stabilise this stretch: Cys3–Cys15, Cys9–Cys24, Cys14–Cys47, Cys34–Cys55, and Cys49–Cys61.

In terms of tissue distribution, expressed by the venom gland.

The protein resides in the secreted. In terms of biological role, non-toxic to mice and insects. This chain is U9-ctenitoxin-Pr1a, found in Phoneutria reidyi (Brazilian Amazonian armed spider).